The chain runs to 332 residues: Homoserine kinase (332 aa).

It belongs to the pseudomonas-type ThrB family.

The enzyme catalyses L-homoserine + ATP = O-phospho-L-homoserine + ADP + H(+). The protein operates within amino-acid biosynthesis; L-threonine biosynthesis; L-threonine from L-aspartate: step 4/5. The sequence is that of Homoserine kinase from Burkholderia vietnamiensis (strain G4 / LMG 22486) (Burkholderia cepacia (strain R1808)).